The primary structure comprises 129 residues: L-ectoine synthase (129 aa).

Belongs to the ectoine synthase family.

The enzyme catalyses (2S)-4-acetamido-2-aminobutanoate = L-ectoine + H2O. Its pathway is amine and polyamine biosynthesis; ectoine biosynthesis; L-ectoine from L-aspartate 4-semialdehyde: step 3/3. In terms of biological role, catalyzes the circularization of gamma-N-acetyl-alpha,gamma-diaminobutyric acid (ADABA) to ectoine (1,4,5,6-tetrahydro-2-methyl-4-pyrimidine carboxylic acid), which is an excellent osmoprotectant. This Halalkalibacterium halodurans (strain ATCC BAA-125 / DSM 18197 / FERM 7344 / JCM 9153 / C-125) (Bacillus halodurans) protein is L-ectoine synthase.